Consider the following 288-residue polypeptide: Shikimate dehydrogenase (NADP(+)) (288 aa).

Residues 15-17 and Thr64 contribute to the shikimate site; that span reads SKS. The Proton acceptor role is filled by Lys68. Position 83 (Glu83) interacts with NADP(+). Asn92 and Asp117 together coordinate shikimate. NADP(+)-binding positions include 141 to 145, 165 to 170, and Met232; these read GAGGA and NRTLSK. Residue Tyr234 coordinates shikimate. Gly254 serves as a coordination point for NADP(+).

This sequence belongs to the shikimate dehydrogenase family. In terms of assembly, homodimer.

The enzyme catalyses shikimate + NADP(+) = 3-dehydroshikimate + NADPH + H(+). The protein operates within metabolic intermediate biosynthesis; chorismate biosynthesis; chorismate from D-erythrose 4-phosphate and phosphoenolpyruvate: step 4/7. Functionally, involved in the biosynthesis of the chorismate, which leads to the biosynthesis of aromatic amino acids. Catalyzes the reversible NADPH linked reduction of 3-dehydroshikimate (DHSA) to yield shikimate (SA). The protein is Shikimate dehydrogenase (NADP(+)) of Psychrobacter arcticus (strain DSM 17307 / VKM B-2377 / 273-4).